The following is a 336-amino-acid chain: Ketol-acid reductoisomerase (NADP(+)) (336 aa).

Residues 2–182 (AKIYYQQDCN…GGARAGVLET (181 aa)) form the KARI N-terminal Rossmann domain. Residues 25–28 (YGSQ), S51, S53, and 83–86 (DEKQ) contribute to the NADP(+) site. H108 is an active-site residue. G134 provides a ligand contact to NADP(+). In terms of domain architecture, KARI C-terminal knotted spans 183-328 (TFREETETDL…AELRGLMSWT (146 aa)). Positions 191, 195, 227, and 231 each coordinate Mg(2+). S252 serves as a coordination point for substrate.

Belongs to the ketol-acid reductoisomerase family. Mg(2+) is required as a cofactor.

The enzyme catalyses (2R)-2,3-dihydroxy-3-methylbutanoate + NADP(+) = (2S)-2-acetolactate + NADPH + H(+). It catalyses the reaction (2R,3R)-2,3-dihydroxy-3-methylpentanoate + NADP(+) = (S)-2-ethyl-2-hydroxy-3-oxobutanoate + NADPH + H(+). It participates in amino-acid biosynthesis; L-isoleucine biosynthesis; L-isoleucine from 2-oxobutanoate: step 2/4. It functions in the pathway amino-acid biosynthesis; L-valine biosynthesis; L-valine from pyruvate: step 2/4. Involved in the biosynthesis of branched-chain amino acids (BCAA). Catalyzes an alkyl-migration followed by a ketol-acid reduction of (S)-2-acetolactate (S2AL) to yield (R)-2,3-dihydroxy-isovalerate. In the isomerase reaction, S2AL is rearranged via a Mg-dependent methyl migration to produce 3-hydroxy-3-methyl-2-ketobutyrate (HMKB). In the reductase reaction, this 2-ketoacid undergoes a metal-dependent reduction by NADPH to yield (R)-2,3-dihydroxy-isovalerate. The protein is Ketol-acid reductoisomerase (NADP(+)) of Lachnoclostridium phytofermentans (strain ATCC 700394 / DSM 18823 / ISDg) (Clostridium phytofermentans).